Consider the following 165-residue polypeptide: UPF0303 protein Bxeno_A1932 (165 aa).

The protein belongs to the UPF0303 family.

This is UPF0303 protein Bxeno_A1932 from Paraburkholderia xenovorans (strain LB400).